The primary structure comprises 137 residues: Mandibular organ-inhibiting hormone (137 aa).

The N-terminal stretch at 1–26 (MTTKCTVMAVVLAACICLQVLPQAYG) is a signal peptide. Glutamine 63 bears the Pyrrolidone carboxylic acid mark. 3 disulfides stabilise this stretch: cysteine 69–cysteine 105, cysteine 85–cysteine 101, and cysteine 88–cysteine 114. Position 134 is a valine amide (valine 134).

This sequence belongs to the arthropod CHH/MIH/GIH/VIH hormone family. As to expression, produced by the medulla terminalis X-organ in the eyestalks and transported to the sinus gland where it is stored and released.

The protein localises to the secreted. Its function is as follows. Represses the synthesis of methyl farnesoate, the precursor of insect juvenile hormone III in the mandibular organ. Also has hyperglycemic activity. This Libinia emarginata (Portly spider crab) protein is Mandibular organ-inhibiting hormone.